The following is a 401-amino-acid chain: 8-amino-7-oxononanoate synthase (401 aa).

Residue Arg24 coordinates substrate. 111–112 (GF) contacts pyridoxal 5'-phosphate. His137 is a binding site for substrate. Pyridoxal 5'-phosphate is bound by residues Ser183, His211, and Thr240. At Lys243 the chain carries N6-(pyridoxal phosphate)lysine. Thr357 contributes to the substrate binding site.

Belongs to the class-II pyridoxal-phosphate-dependent aminotransferase family. BioF subfamily. In terms of assembly, homodimer. Requires pyridoxal 5'-phosphate as cofactor.

The catalysed reaction is 6-carboxyhexanoyl-[ACP] + L-alanine + H(+) = (8S)-8-amino-7-oxononanoate + holo-[ACP] + CO2. Its pathway is cofactor biosynthesis; biotin biosynthesis. Its function is as follows. Catalyzes the decarboxylative condensation of pimeloyl-[acyl-carrier protein] and L-alanine to produce 8-amino-7-oxononanoate (AON), [acyl-carrier protein], and carbon dioxide. This is 8-amino-7-oxononanoate synthase from Xanthomonas campestris pv. campestris (strain 8004).